Consider the following 1150-residue polypeptide: MDADWGEIAQYHTQLGYRPDPTNPSAHHSAPTAVAFDTRSELLWVGKDQGRVAAYVYFLNNGIMEFQRHIAFLSHPRQQGPVHQFLFNETGVISLGSHNVHMAQRGGMCLANIGHVNMTNLRCMTFTSRGTSEILVAGDQDTMFVIDLNKKQITKEVPAPNHYFLMKKSKYICAASRNGCVDILDPITLKVINTWNTRSAQLNDMDVQHDFIVTCGASLKQGTYMADPYVNVFDLKNMRSFPPISFPPLVTYARMHPKMVTTSIVVSKTGQMHVVDIANPHNPIVRQVLGHTHLALFDVSPSGQAMVFTDTEGYIHVWGPTSKAVSFVDQGLPVEFETEQPNFASIPWSEDFPVNMVGLPHYSDALLSAWPADLSSDVGAPPAQFDQAYVDAMMPNGNVGLYGKAVAGTRRNQVVDTRSADKPQSSLQAPKFLSEKARDGFKGLTMDTSDIETSEDIVPSPIRTDIESLKSVVPNMYHLFEIKFSKFGVDDFDFGYYNKTHHSGLENHITNSYANSLLQLLRFTPILRNLALQHAATSCLDQHCLLCELGYLCDSMEKARGASCQATNMLKMLSQHPAAANLHLLDGDRIASSSAMKIQGLLRFLLDFMSRDYGKTSPGINDLENATATSSQSLIRCDQCKSETSRPQTNYVQDLAYSPVTSNGNKGVDVADSYLAAQQGVARGRMAPAKLPSFSQILKKSIEREQVTRGWCTTCRGYQPLSMRKIIKSIPQVLAANTCISSVEEKKLWATPGWLPEEVGFIIDKEHIFCYEGAELDWLIKNGKYKLYVYSLMGLVVNIEPGPTFKPHPVAIINAAHSEPQKPAKSQWHLFNDFHVKPISAREALTFNTSWKTPLVVMFQLKAANNHIDSTWLQRLDTSILYQDQSPEAEDKSYTLLDRNKEAPTPGTVIAIDAEFVLAKDFEYAVNSDGEKETIRPRIHSLGRVSVVRASGDRRGVPFIDDYINIKEPIVNYFTEFSGLTETDLDPKTSRHNLVPLKLAFKKLWLLLNLGCIFVGHGLRSDFRVINLQVPREQVHDTQELFWVEAQRRKLSLAFLAKSVLNLEIQGHMHDSIEDANTAQLLYWKYKELLESGRLHEELKKIYAFGVKHGFRPVKVAGQSAQRTETPPMVDDAQPGALLPYQPPELLQGS.

4 WD repeats span residues A26 to Q67, G114 to E156, P158 to T194, and G290 to V328. Residues S326–S471 form a linker region. A USP domain is found at V472–K862. The 169-residue stretch at A911 to A1079 folds into the Exonuclease domain. D913, E915, D1022, and D1075 together coordinate a divalent metal cation. The tract at residues G1118 to S1150 is disordered.

The protein belongs to the peptidase C19 family. PAN2 subfamily. In terms of assembly, forms a heterotrimer with an asymmetric homodimer of the regulatory subunit PAN3 to form the poly(A)-nuclease (PAN) deadenylation complex. It depends on a divalent metal cation as a cofactor.

The protein resides in the cytoplasm. The enzyme catalyses Exonucleolytic cleavage of poly(A) to 5'-AMP.. Positively regulated by the regulatory subunit PAN3. In terms of biological role, catalytic subunit of the poly(A)-nuclease (PAN) deadenylation complex, one of two cytoplasmic mRNA deadenylases involved in mRNA turnover. PAN specifically shortens poly(A) tails of RNA and the activity is stimulated by poly(A)-binding protein PAB1. PAN deadenylation is followed by rapid degradation of the shortened mRNA tails by the CCR4-NOT complex. Deadenylated mRNAs are then degraded by two alternative mechanisms, namely exosome-mediated 3'-5' exonucleolytic degradation, or deadenylation-dependent mRNA decaping and subsequent 5'-3' exonucleolytic degradation by XRN1. May also be involved in post-transcriptional maturation of mRNA poly(A) tails. The sequence is that of PAN2-PAN3 deadenylation complex catalytic subunit PAN2 from Pyricularia oryzae (strain 70-15 / ATCC MYA-4617 / FGSC 8958) (Rice blast fungus).